The following is a 341-amino-acid chain: Paired box protein Pax-9 (341 aa).

A DNA-binding region (paired) is located at residues 4-130 (AFGEVNQLGG…SSISRILRNK (127 aa)). A PAI subdomain region spans residues 7–63 (EVNQLGGVFVNGRPLPNAIRLRIVELAQLGIRPCDISRQLRVSHGCVSKILARYNET). The interval 82 to 130 (TVVKHIRTYKQRDPGIFAWEIRDRLLADGVCDKYNVPSVSSISRILRNK) is RED subdomain. Residues 168–189 (AAAAKVPTPPGVPAIPGSVAMP) are interaction with KDM5B.

In terms of assembly, interacts with KDM5B.

Its subcellular location is the nucleus. In terms of biological role, transcription factor required for normal development of thymus, parathyroid glands, ultimobranchial bodies, teeth, skeletal elements of skull and larynx as well as distal limbs. The sequence is that of Paired box protein Pax-9 (PAX9) from Callimico goeldii (Goeldi's marmoset).